Consider the following 3133-residue polypeptide: Cysteine repeat modular protein A (3133 aa).

Residues 1 to 39 form a disordered region; it reads MDSASTSMSRVHPSGVYRRPLLPSGGPRSTSERDERVDL. A compositionally biased stretch (basic and acidic residues) spans 30–39; the sequence is TSERDERVDL. A helical membrane pass occupies residues 123 to 143; it reads LFLLFSSSPLLLLLLLHQFFI. Composition is skewed to basic and acidic residues over residues 173–211 and 301–311; these read TFEE…DGKE and NESEKAERARL. 2 disordered regions span residues 173 to 234 and 294 to 317; these read TFEE…EGRR and VSPS…STPA. Residues Asn301, Asn392, and Asn470 are each glycosylated (N-linked (GlcNAc...) asparagine). In terms of domain architecture, Kringle spans 577 to 644; that stretch reads DETLEQGKLY…DPHVRFDFCD (68 aa). 2 disulfides stabilise this stretch: Cys599–Cys631 and Cys620–Cys643. N-linked (GlcNAc...) asparagine glycosylation is found at Asn1364 and Asn1532. A run of 3 helical transmembrane segments spans residues 2229–2249, 2276–2296, and 2339–2359; these read MVWN…FNIV, LTGI…PSWI, and VFYA…MSII. A glycan (N-linked (GlcNAc...) asparagine) is linked at Asn2369. The next 3 membrane-spanning stretches (helical) occupy residues 2420-2440, 2489-2509, and 2539-2559; these read AAKF…FVYS, VGIT…FLVL, and WEMV…VALI. An N-linked (GlcNAc...) asparagine glycan is attached at Asn2565. Residues 2569–2589 traverse the membrane as a helical segment; it reads VWLAVVIAVIFLIIHLVTQPF. N-linked (GlcNAc...) asparagine glycosylation is present at Asn2602. 2 helical membrane-spanning segments follow: residues 2607 to 2627 and 2632 to 2652; these read IWTI…SGSV and LLFV…SLMF. Basic and acidic residues-rich tracts occupy residues 2827 to 2838 and 3049 to 3069; these read FAAKDETPTAEE and QEEN…DREI. Disordered regions lie at residues 2827–2847 and 3049–3101; these read FAAK…DERL and QEEN…LPEG. A coiled-coil region spans residues 2955 to 3068; sequence SEALQKRNRK…KEEREEADRE (114 aa). Residues 3083–3094 are compositionally biased toward acidic residues; sequence GEDDTATIDDSS.

Component of a complex, at least composed of cysteine repeat modular protein A (CRMPa), cysteine repeat modular protein B (CRMPb), micronemal protein 15 (MIC15) and thrombospondin type 1 domain-containing protein (TSP1).

It is found in the cell membrane. It localises to the endoplasmic reticulum. The protein localises to the golgi apparatus. In terms of biological role, required for triggering rhoptry secretion. Plays a role in host cell invasion. In Toxoplasma gondii, this protein is Cysteine repeat modular protein A.